Consider the following 321-residue polypeptide: Ras association domain-containing protein 4 (321 aa).

The disordered stretch occupies residues 79 to 159 (HLPSTSWMPR…RPKCRAPGEA (81 aa)). The span at 98–110 (SPQNGNITAQGPS) shows a compositional bias: polar residues. S141 bears the Phosphoserine mark. One can recognise a Ras-associating domain in the interval 174 to 262 (YNHKTSVFTP…ARIFLMEADL (89 aa)). The SARAH domain maps to 270–317 (VAQYIKFEMPVLDSFVEKLKEEEEREIIKLTMKFQALRLTMLQRLEQL).

As to quaternary structure, interacts directly with activated KRAS in a GTP-dependent manner. As to expression, widely expressed. Frequently down-regulated in tumor cell lines.

Functionally, potential tumor suppressor. May act as a KRAS effector protein. May promote apoptosis and cell cycle arrest. This is Ras association domain-containing protein 4 (RASSF4) from Homo sapiens (Human).